A 362-amino-acid chain; its full sequence is MSKNIVLLPGDHVGPEVVAEAVKVLEAVSSAIGVKFNFSKHLIGGASIDAYGVPLSDEALEAAKKADAVLLGAVGGPKWGTGSVRPEQGLLKIRKELNLYANLRPCSFASDALLKLSPLKSEIVKGTDFVVVRELVGGIYFGDRKEDAGDGVASDTESYSVPEVQRITRMAAFLALQSDPPLPLWSLDKANVLASSRLWRKTVEETIKNEFPQLTVQHQLIDSAAMILVKSPTKLNGVIVTNNMFGDIISDEASVIPGSLGLLPSASLASLPDTNKAFGLYEPCHGSAPDLGPGKVNPLATILSAAMMLKLSLDLVDAGRAIEQAVKNVLDAGIMTADLGGSSSTQEVGDAVAQEVAKLLKN.

76–87 serves as a coordination point for NAD(+); that stretch reads GPKWGTGSVRPE. Residues arginine 94, arginine 104, arginine 133, and aspartate 222 each contribute to the substrate site. Mg(2+) contacts are provided by aspartate 222, aspartate 247, and aspartate 251. 286-297 provides a ligand contact to NAD(+); that stretch reads GSAPDLGPGKVN.

This sequence belongs to the isocitrate and isopropylmalate dehydrogenases family. Homodimer. The cofactor is Mg(2+). Requires Mn(2+) as cofactor.

The protein resides in the cytoplasm. The enzyme catalyses (2R,3S)-3-isopropylmalate + NAD(+) = 4-methyl-2-oxopentanoate + CO2 + NADH. It functions in the pathway amino-acid biosynthesis; L-leucine biosynthesis; L-leucine from 3-methyl-2-oxobutanoate: step 3/4. Functionally, catalyzes the oxidation of 3-carboxy-2-hydroxy-4-methylpentanoate (3-isopropylmalate) to 3-carboxy-4-methyl-2-oxopentanoate. The product decarboxylates to 4-methyl-2 oxopentanoate. The protein is 3-isopropylmalate dehydrogenase (LEU2) of Pichia angusta (Yeast).